A 463-amino-acid polypeptide reads, in one-letter code: Interferon-inducible GTPase 5 (463 aa).

The IRG-type G domain maps to 53-235 (IRLEVGVTGE…PTLVSTWEHD (183 aa)). Residues 62-69 (ESGAGKSS), 87-91 (TGVME), 169-171 (KVD), and 216-218 (SNL) each bind GTP. Phosphoserine is present on residues S247 and S304. The disordered stretch occupies residues 404-437 (LEDDEPQPEVSLEVASDNGVEKGGSGEGGGEEAP).

This sequence belongs to the TRAFAC class dynamin-like GTPase superfamily. IRG family. As to expression, abundantly expressed in semen (at protein level).

It localises to the cell projection. The protein localises to the cilium. Its subcellular location is the flagellum. The protein resides in the lipid droplet. It catalyses the reaction GTP + H2O = GDP + phosphate + H(+). In terms of biological role, required for sperm motility and therefore male fertility, via positive regulation of spermatozoa fibrous sheath formation. This Homo sapiens (Human) protein is Interferon-inducible GTPase 5.